The primary structure comprises 620 residues: E3 ubiquitin-protein ligase AMFR (620 aa).

The next 7 helical transmembrane spans lie at 75–95, 115–135, 138–158, 179–199, 201–221, 247–267, and 269–289; these read LFVW…GKVI, FWNF…VQRV, VVLW…VQLC, VLAL…LCAL, GHIH…LVTV, SSYI…LDLM, and HIHM…VIFM. The RING-type; atypical zinc finger occupies 334 to 372; sequence CAICWDSMTTARKLPCGHLFHNSCLRSWLEQDTSCPTCR. The region spanning 449–491 is the CUE domain; it reads QLNGMAHQIQEMFPQVPYHLILQDLQLTRSVEVTTDNILEGRI. A compositionally biased stretch (low complexity) spans 510 to 526; the sequence is ASEDGAGASSGSEVAAP. 2 disordered regions span residues 510–544 and 569–598; these read ASED…SADE and PEDG…DSVT. A compositionally biased stretch (basic and acidic residues) spans 531 to 544; that stretch reads FEVRGSRFSKSADE. Positions 581–595 are enriched in acidic residues; it reads DNDDSVPSIEDEDSD.

Widely expressed.

It is found in the endoplasmic reticulum membrane. The catalysed reaction is [E2 ubiquitin-conjugating enzyme]-S-ubiquitinyl-L-cysteine + [acceptor protein]-L-cysteine = [E2 ubiquitin-conjugating enzyme]-L-cysteine + [acceptor protein]-S-ubiquitinyl-L-cysteine.. It functions in the pathway protein modification; protein ubiquitination. Functionally, E3 ubiquitin-protein ligase that mediates the polyubiquitination of lysine and cysteine residues on target proteins. May participate in the final step of endoplasmic reticulum-associated degradation (ERAD). Required for proper lipid homeostasis. The protein is E3 ubiquitin-protein ligase AMFR of Danio rerio (Zebrafish).